A 220-amino-acid polypeptide reads, in one-letter code: Ribose-5-phosphate isomerase A (220 aa).

Substrate-binding positions include 25–28 (TGST), 80–83 (DGAD), and 93–96 (KGGG). Glutamate 102 serves as the catalytic Proton acceptor. Residue lysine 120 coordinates substrate.

It belongs to the ribose 5-phosphate isomerase family. In terms of assembly, homodimer.

The catalysed reaction is aldehydo-D-ribose 5-phosphate = D-ribulose 5-phosphate. Its pathway is carbohydrate degradation; pentose phosphate pathway; D-ribose 5-phosphate from D-ribulose 5-phosphate (non-oxidative stage): step 1/1. Functionally, catalyzes the reversible conversion of ribose-5-phosphate to ribulose 5-phosphate. This chain is Ribose-5-phosphate isomerase A, found in Bacillus cereus (strain ATCC 10987 / NRS 248).